The following is a 294-amino-acid chain: tRNA pseudouridine synthase B (294 aa).

The active-site Nucleophile is Asp-39.

It belongs to the pseudouridine synthase TruB family. Type 1 subfamily.

The enzyme catalyses uridine(55) in tRNA = pseudouridine(55) in tRNA. Functionally, responsible for synthesis of pseudouridine from uracil-55 in the psi GC loop of transfer RNAs. In Streptococcus agalactiae serotype Ia (strain ATCC 27591 / A909 / CDC SS700), this protein is tRNA pseudouridine synthase B.